The following is a 71-amino-acid chain: Large ribosomal subunit protein uL30 (71 aa).

This sequence belongs to the universal ribosomal protein uL30 family. Part of the 50S ribosomal subunit.

The chain is Large ribosomal subunit protein uL30 from Mycolicibacterium paratuberculosis (strain ATCC BAA-968 / K-10) (Mycobacterium paratuberculosis).